Consider the following 589-residue polypeptide: Protein sprouty (589 aa).

Disordered stretches follow at residues 1-37 (MDRR…GVDH), 102-194 (RPSS…RPES), and 239-320 (LHLQ…MGLG). 2 stretches are compositionally biased toward low complexity: residues 104–135 (SSLS…SSSS) and 148–162 (NNSI…INNN). Positions 163 to 172 (FLSHFQSAEP) are enriched in polar residues. Residues 239 to 272 (LHLQQHQQHLQQQQQQQQQQQQQQHLQHQQNQQH) show a composition bias toward low complexity. The segment covering 276 to 286 (ATTTQATSVGS) has biased composition (polar residues). In terms of domain architecture, SPR spans 380-499 (RCGRCRCEQC…CYGRFAGRGC (120 aa)).

It belongs to the sprouty family. In terms of assembly, interacts with DRK and RasGAP1 proteins of the Ras pathway. In ovary, expressed from stage 7 of oogenesis in the posterior follicle cells and during stage 9 when the follicle cells migrate posteriorly over the oocyte nucleus, expression is seen in the dorsal and lateral cells and is excluded from the ventral cells. Once the migration of follicle cells is complete expressed in the dorsal-anterior corner of the egg chamber. Expressed in the embryonic tracheal system, developing eye imaginal disk, embryonic chordotonal organ precursors, midline glia and wing imaginal disk.

It localises to the cell membrane. Its function is as follows. Inhibitor of tracheal branching that restricts branch budding by antagonizing the BNL-FGF pathway (BNL: branchless, an fgf inducer of branching). Acts as an antagonist of EGFR-mediated signaling in the eye (where it is important for cell determination) midline glia, chordotonal organs, wing and ovarian follicle cells. The protein is Protein sprouty (sty) of Drosophila melanogaster (Fruit fly).